The primary structure comprises 219 residues: Thiopurine S-methyltransferase (219 aa).

Residues Trp-10, Leu-45, Glu-66, and Arg-123 each coordinate S-adenosyl-L-methionine.

This sequence belongs to the class I-like SAM-binding methyltransferase superfamily. TPMT family.

The protein resides in the cytoplasm. The enzyme catalyses S-adenosyl-L-methionine + a thiopurine = S-adenosyl-L-homocysteine + a thiopurine S-methylether.. The protein is Thiopurine S-methyltransferase of Shewanella frigidimarina (strain NCIMB 400).